Consider the following 861-residue polypeptide: Valine--tRNA ligase (861 aa).

Residues 42 to 52 (PNITGRIHMGH) carry the 'HIGH' region motif. The 'KMSKS' region signature appears at 521–525 (KMSKS). Lys-524 is a binding site for ATP. Residues 792 to 861 (VAGLNLQSEI…ILNQILGDLM (70 aa)) adopt a coiled-coil conformation.

Belongs to the class-I aminoacyl-tRNA synthetase family. ValS type 1 subfamily. In terms of assembly, monomer.

It is found in the cytoplasm. The enzyme catalyses tRNA(Val) + L-valine + ATP = L-valyl-tRNA(Val) + AMP + diphosphate. Its function is as follows. Catalyzes the attachment of valine to tRNA(Val). As ValRS can inadvertently accommodate and process structurally similar amino acids such as threonine, to avoid such errors, it has a 'posttransfer' editing activity that hydrolyzes mischarged Thr-tRNA(Val) in a tRNA-dependent manner. The polypeptide is Valine--tRNA ligase (Pseudothermotoga lettingae (strain ATCC BAA-301 / DSM 14385 / NBRC 107922 / TMO) (Thermotoga lettingae)).